The following is a 184-amino-acid chain: Phosphodiesterase YfcE (184 aa).

7 residues coordinate Mn(2+): D9, H11, D37, N73, H105, H127, and H129.

Belongs to the metallophosphoesterase superfamily. YfcE family. It depends on Mn(2+) as a cofactor.

Its function is as follows. Shows phosphodiesterase activity. The sequence is that of Phosphodiesterase YfcE (yfcE) from Escherichia coli O157:H7.